We begin with the raw amino-acid sequence, 401 residues long: MNNFKKVVLAYSGGLDTSAIIPWLKENYHVDVVAFVADIGQSKKDLNGIEKKALQSGAIDCRVFDLKEEFIKDYVYPVLKTGSLYEGNYLLGTAIARPIIAKKQVEFASSIGAKFLCHGATGKGNDQVRFEIAYAALAPYMKVIAPWREWNLNSRESLLEYLREKNIPTSATLEKIYSRDENSLHISTEGGLLEDLWNKPNADCWNWTVELEDAPEQPEYISLIVKNGSVVSVNNEFLTPLKCIEKLNKIGSKHAIGRIDIVENRLVGIKSRGCYETPGGTIMHIALRAIEQLVFDRESFKWREKIGLEMSSVVYDGRWFTPIRKSLQASADSLSSEVNGEVVLKLYKGSVIPVQKKSSNSLYSKEYATFGEDEVYKHSDAEGFIRLFSLSSRIRAQNKLK.

ATP contacts are provided by residues 10–18 (AYSGGLDTS) and Ala37. Tyr89 is an L-citrulline binding site. An ATP-binding site is contributed by Gly119. Positions 121, 125, and 126 each coordinate L-aspartate. Asn125 is an L-citrulline binding site. L-citrulline is bound by residues Arg129, Ser178, Ser187, Glu263, and Tyr275.

The protein belongs to the argininosuccinate synthase family. Type 1 subfamily. As to quaternary structure, homotetramer.

The protein localises to the cytoplasm. It carries out the reaction L-citrulline + L-aspartate + ATP = 2-(N(omega)-L-arginino)succinate + AMP + diphosphate + H(+). It participates in amino-acid biosynthesis; L-arginine biosynthesis; L-arginine from L-ornithine and carbamoyl phosphate: step 2/3. The chain is Argininosuccinate synthase from Buchnera aphidicola subsp. Schizaphis graminum (strain Sg).